Here is a 370-residue protein sequence, read N- to C-terminus: Histidinol-phosphate aminotransferase 1 (370 aa).

The residue at position 222 (Lys222) is an N6-(pyridoxal phosphate)lysine.

It belongs to the class-II pyridoxal-phosphate-dependent aminotransferase family. Histidinol-phosphate aminotransferase subfamily. In terms of assembly, homodimer. Pyridoxal 5'-phosphate is required as a cofactor.

The catalysed reaction is L-histidinol phosphate + 2-oxoglutarate = 3-(imidazol-4-yl)-2-oxopropyl phosphate + L-glutamate. It functions in the pathway amino-acid biosynthesis; L-histidine biosynthesis; L-histidine from 5-phospho-alpha-D-ribose 1-diphosphate: step 7/9. In Bacillus thuringiensis subsp. konkukian (strain 97-27), this protein is Histidinol-phosphate aminotransferase 1.